The sequence spans 149 residues: Ribonuclease HI (149 aa).

Residues 1–142 form the RNase H type-1 domain; that stretch reads MTPKVTIYTD…ADALANEGLR (142 aa). Mg(2+) contacts are provided by Asp-10, Glu-48, Asp-70, and Asp-134.

This sequence belongs to the RNase H family. Monomer. The cofactor is Mg(2+).

The protein localises to the cytoplasm. It catalyses the reaction Endonucleolytic cleavage to 5'-phosphomonoester.. In terms of biological role, endonuclease that specifically degrades the RNA of RNA-DNA hybrids. The polypeptide is Ribonuclease HI (Caulobacter vibrioides (strain ATCC 19089 / CIP 103742 / CB 15) (Caulobacter crescentus)).